A 370-amino-acid chain; its full sequence is Peptidyl-prolyl cis-trans isomerase D (370 aa).

S5 bears the Phosphoserine mark. The 165-residue stretch at 19-183 folds into the PPIase cyclophilin-type domain; it reads FFDVDIGGER…KLCVIAECGE (165 aa). Residue K171 is modified to N6-acetyllysine. Residues 185-215 are chaperone activity; that stretch reads KEGDDWGIFPKDGSGDSHPDFPEDADIDLKD. Residue S198 is modified to Phosphoserine. An interaction with HSP90AB1 region spans residues 214 to 370; the sequence is KDVDKILLIS…EKAVYAKMFA (157 aa). TPR repeat units lie at residues 223-256, 273-306, and 307-340; these read SEDL…VDSS, LSCV…DPSN, and TKAL…APGD.

Belongs to the cyclophilin-type PPIase family. PPIase D subfamily. In terms of assembly, identified in ESR1 or NR3C1/GCR steroid receptor-chaperone complexes. Found in HSP90 chaperone complexes with kinase clients LCK or EIF2AK1. Two monomers associate with one HSP90 homodimer. Interacts with HSP90AA1. Interacts with HSP90AB1; PPID and FKBP4 compete for binding to HSP90AB1 and the interaction is mutually exclusive with the PPID:HSPA8 interaction. Interacts with HSPA8; PPID and STIP1 but not FKBP4 compete for binding to HSPA8 and the interaction is mutually exclusive with the PPID:HSP90AB1 interaction. Interacts with S100A1 and S100A2; the interactions dissociate the PPID:HSP90AA1 interaction. Interacts with S100A6. Interacts with MYB, ILF2, XRCC6, RACK1 and RPS3. Interacts with cytoplasmic dynein 1 intermediate chain (DYNC1I1 or DYNC1I2).

The protein localises to the cytoplasm. Its subcellular location is the nucleus. It localises to the nucleolus. The protein resides in the nucleoplasm. The catalysed reaction is [protein]-peptidylproline (omega=180) = [protein]-peptidylproline (omega=0). With respect to regulation, less sensitive to inhibition by cyclosporin A than is CYP-18. Functionally, PPIase that catalyzes the cis-trans isomerization of proline imidic peptide bonds in oligopeptides and may therefore assist protein folding. Proposed to act as a co-chaperone in HSP90 complexes such as in unligated steroid receptors heterocomplexes. Different co-chaperones seem to compete for association with HSP90 thus establishing distinct HSP90-co-chaperone-receptor complexes with the potential to exert tissue-specific receptor activity control. May have a preference for estrogen receptor complexes and is not found in glucocorticoid receptor complexes. May be involved in cytoplasmic dynein-dependent movement of the receptor from the cytoplasm to the nucleus. May regulate MYB by inhibiting its DNA-binding activity. Involved in regulation of AHR signaling by promoting the formation of the AHR:ARNT dimer; the function is independent of HSP90 but requires the chaperone activity region. Involved in regulation of UV radiation-induced apoptosis. The protein is Peptidyl-prolyl cis-trans isomerase D of Mus musculus (Mouse).